A 216-amino-acid polypeptide reads, in one-letter code: Sperm microtubule inner protein 8 (216 aa).

As to quaternary structure, microtubule inner protein component of sperm flagellar doublet microtubules. Expressed in testis.

The protein localises to the cytoplasm. The protein resides in the cytoskeleton. Its subcellular location is the flagellum axoneme. Microtubule inner protein (MIP) part of the dynein-decorated doublet microtubules (DMTs) in flagellum axoneme. May serve to reinforce and thus stabilize the microtubule structure in the sperm flagella. This chain is Sperm microtubule inner protein 8 (Spmip8), found in Mus musculus (Mouse).